Reading from the N-terminus, the 77-residue chain is MKNYSKNATYLITVLLFSFVAMLLIIPSKCEAVSNDMQPLEARTADLVQQPRYIIDVPPRCPPGSKFVHKRCRVIVP.

A signal peptide spans 1-32 (MKNYSKNATYLITVLLFSFVAMLLIIPSKCEA). A propeptide spanning residues 33–52 (VSNDMQPLEARTADLVQQPR) is cleaved from the precursor. A disulfide bond links Cys-61 and Cys-72.

Belongs to the secapin family. As to expression, expressed by the venom gland.

Its subcellular location is the secreted. In terms of biological role, nontoxic peptide. In Apis cerana cerana (Oriental honeybee), this protein is Secapin.